Here is a 235-residue protein sequence, read N- to C-terminus: Putative quercetin 2,3-dioxygenase ZMO1337 (235 aa).

Residues histidine 57, histidine 59, histidine 101, and glutamate 103 each coordinate a divalent metal cation.

The protein belongs to the pirin family. It depends on a divalent metal cation as a cofactor.

The enzyme catalyses quercetin + O2 = 2-(3,4-dihydroxybenzoyloxy)-4,6-dihydroxybenzoate + CO. Its pathway is flavonoid metabolism; quercetin degradation. Functionally, putative quercetin 2,3-dioxygenase. The protein is Putative quercetin 2,3-dioxygenase ZMO1337 of Zymomonas mobilis subsp. mobilis (strain ATCC 31821 / ZM4 / CP4).